The chain runs to 302 residues: MMNFTLLTYLADCQPKVRSELEKFSKNLEEDIQQLREIGLDILVDGQDYRLVPMLPLLNPQQISTALFPYSIHYQPIISSTNEWILQNILSLKKGDLCVAEYQTAGRGRRGRQWLSPFAGQIMFSFYWAFDPKKSIEGLSLVIGLAIAEVLNVQVKWPNDILFDERKLGGILVEIANHKNGMLNLVIGIGINVSLSKQTEISQPYAEVCEIDPDVERQTLLPKLIQHLYTRLNIFEQNGIDEEFQQAWQSYNAFSNSEINVLTEQGVISGIEQGIDERGYLKVLCGNKIQMFNGGEVSLRKK.

A DNA-binding region (H-T-H motif) is located at residues 14–33 (QPKVRSELEKFSKNLEEDIQ). The 175-residue stretch at 62–236 (QISTALFPYS…HLYTRLNIFE (175 aa)) folds into the BPL/LPL catalytic domain. Residues 80–82 (STN), Gln103, 107–109 (RGR), and Lys167 contribute to the biotin site.

This sequence belongs to the biotin--protein ligase family.

It carries out the reaction biotin + L-lysyl-[protein] + ATP = N(6)-biotinyl-L-lysyl-[protein] + AMP + diphosphate + H(+). Its function is as follows. Acts both as a biotin--[acetyl-CoA-carboxylase] ligase and a biotin-operon repressor. In the presence of ATP, BirA activates biotin to form the BirA-biotinyl-5'-adenylate (BirA-bio-5'-AMP or holoBirA) complex. HoloBirA can either transfer the biotinyl moiety to the biotin carboxyl carrier protein (BCCP) subunit of acetyl-CoA carboxylase, or bind to the biotin operator site and inhibit transcription of the operon. The sequence is that of Bifunctional ligase/repressor BirA from Haemophilus influenzae (strain ATCC 51907 / DSM 11121 / KW20 / Rd).